The primary structure comprises 419 residues: Akuammiline synthase 1 (419 aa).

The Proton acceptor role is filled by histidine 151. The Nuclear localization signal motif lies at 206 to 213 (TRRFVFPA). Aspartate 359 functions as the Proton acceptor in the catalytic mechanism.

It belongs to the plant acyltransferase family. Monomer.

It is found in the cytoplasm. It localises to the nucleus. It carries out the reaction rhazimol + acetyl-CoA = akuammiline + CoA + H(+). It functions in the pathway alkaloid biosynthesis. Functionally, acyltransferase involved in the biosynthesis of akuammilan monoterpene indole alkaloids (MIAs) natural products, components with various biological properties such as antidiabetic, antibacterial, anti-inflammatory, anticancer, and antimalarial activities. Catalyzes the conversion of rhazimol to akuammiline. This Alstonia scholaris (Dogbane) protein is Akuammiline synthase 1.